Reading from the N-terminus, the 579-residue chain is Protein disulfide isomerase-like 1-3 (579 aa).

Positions 1–25 (MASSSTSISLLLFVSFILLLVNSRA) are cleaved as a signal peptide. The N-linked (GlcNAc...) asparagine glycan is linked to Asn27. Composition is skewed to basic and acidic residues over residues 44–69 (EESKEQSHGGGSYHEEEHDHQHRDFE) and 80–89 (EFHHGDHGYE). The tract at residues 44–91 (EESKEQSHGGGSYHEEEHDHQHRDFENYDDLEQGGGEFHHGDHGYEEE) is disordered. A Thioredoxin 1 domain is found at 81–204 (FHHGDHGYEE…IVTWLKKKAS (124 aa)). Asn108 and Asn115 each carry an N-linked (GlcNAc...) asparagine glycan. Catalysis depends on nucleophile residues Cys128 and Cys131. Cys128 and Cys131 are oxidised to a cystine. Residues Asn209, Asn293, Asn313, and Asn338 are each glycosylated (N-linked (GlcNAc...) asparagine). Positions 416 to 546 (DFLADKLKPF…LYKFLKKHAS (131 aa)) constitute a Thioredoxin 2 domain. Catalysis depends on nucleophile residues Cys467 and Cys470. Residues Cys467 and Cys470 are joined by a disulfide bond. Asn520 carries N-linked (GlcNAc...) asparagine glycosylation. Residues 558–579 (EPVISTMKSDEKIEGDSSKDEL) are disordered. Over residues 565–579 (KSDEKIEGDSSKDEL) the composition is skewed to basic and acidic residues. Residues 576 to 579 (KDEL) carry the Prevents secretion from ER motif.

Belongs to the protein disulfide isomerase family. As to expression, widely expressed.

It is found in the endoplasmic reticulum lumen. The catalysed reaction is Catalyzes the rearrangement of -S-S- bonds in proteins.. Functionally, acts as a protein-folding catalyst that interacts with nascent polypeptides to catalyze the formation, isomerization, and reduction or oxidation of disulfide bonds. The sequence is that of Protein disulfide isomerase-like 1-3 (PDIL1-3) from Arabidopsis thaliana (Mouse-ear cress).